A 580-amino-acid chain; its full sequence is Amino-acid acetyltransferase, mitochondrial (580 aa).

Residues 403-560 (LTMQNLFDDK…KLRHQNGVVD (158 aa)) enclose the N-acetyltransferase domain.

This sequence belongs to the acetyltransferase family.

The protein localises to the mitochondrion. The enzyme catalyses L-glutamate + acetyl-CoA = N-acetyl-L-glutamate + CoA + H(+). Its pathway is amino-acid biosynthesis; L-arginine biosynthesis; N(2)-acetyl-L-ornithine from L-glutamate: step 1/4. In terms of biological role, N-acetylglutamate synthase involved in arginine biosynthesis. The chain is Amino-acid acetyltransferase, mitochondrial (ARG2) from Candida albicans (strain SC5314 / ATCC MYA-2876) (Yeast).